The following is a 136-amino-acid chain: Small ribosomal subunit protein uS19 (136 aa).

Belongs to the universal ribosomal protein uS19 family.

Its function is as follows. Protein S19 forms a complex with S13 that binds strongly to the 16S ribosomal RNA. The sequence is that of Small ribosomal subunit protein uS19 from Methanosphaera stadtmanae (strain ATCC 43021 / DSM 3091 / JCM 11832 / MCB-3).